A 246-amino-acid chain; its full sequence is Thiamine import ATP-binding protein ThiQ (246 aa).

Positions 10–239 constitute an ABC transporter domain; it reads VKLDALAFAY…QGPPAFARYL (230 aa). 41–48 lines the ATP pocket; that stretch reads GPSGSGKS.

This sequence belongs to the ABC transporter superfamily. Thiamine importer (TC 3.A.1.19.1) family. As to quaternary structure, the complex is composed of two ATP-binding proteins (ThiQ), two transmembrane proteins (ThiP) and a solute-binding protein (ThiB).

The protein localises to the cell inner membrane. It carries out the reaction thiamine(out) + ATP + H2O = thiamine(in) + ADP + phosphate + H(+). In terms of biological role, part of the ABC transporter complex ThiBPQ involved in thiamine import. Responsible for energy coupling to the transport system. This Chelativorans sp. (strain BNC1) protein is Thiamine import ATP-binding protein ThiQ.